Here is an 885-residue protein sequence, read N- to C-terminus: Leucine--tRNA ligase (885 aa).

The 'HIGH' region motif lies at 53 to 63 (PYPSGKLHMGH). Positions 631-635 (KMSKS) match the 'KMSKS' region motif. Position 634 (Lys634) interacts with ATP.

Belongs to the class-I aminoacyl-tRNA synthetase family.

It localises to the cytoplasm. It carries out the reaction tRNA(Leu) + L-leucine + ATP = L-leucyl-tRNA(Leu) + AMP + diphosphate. The polypeptide is Leucine--tRNA ligase (Psychrobacter sp. (strain PRwf-1)).